The primary structure comprises 1343 residues: DNA-directed RNA polymerase subunit beta (1343 aa).

It belongs to the RNA polymerase beta chain family. The RNAP catalytic core consists of 2 alpha, 1 beta, 1 beta' and 1 omega subunit. When a sigma factor is associated with the core the holoenzyme is formed, which can initiate transcription.

It catalyses the reaction RNA(n) + a ribonucleoside 5'-triphosphate = RNA(n+1) + diphosphate. Functionally, DNA-dependent RNA polymerase catalyzes the transcription of DNA into RNA using the four ribonucleoside triphosphates as substrates. In Shewanella loihica (strain ATCC BAA-1088 / PV-4), this protein is DNA-directed RNA polymerase subunit beta.